A 438-amino-acid polypeptide reads, in one-letter code: Keratin, type I cytoskeletal 13 (438 aa).

Positions 1–95 (MSCRFQSSSM…SVDGGLLSGN (95 aa)) are head. Omega-N-methylarginine is present on residues Arg-27 and Arg-35. Positions 96–131 (EKITMQNLNDRLASYLEKVRALEAANADLEVKIRDW) are coil. One can recognise an IF rod domain in the interval 96 to 408 (EKITMQNLND…SLLEGQDAKM (313 aa)). Residues 132–150 (HLKQSPTSPERDYSAYYKT) are linker 1. Positions 151 to 242 (IEELRIKILE…KNHEEEMKEF (92 aa)) are coil 1B. The interval 243 to 265 (SNQAVGQVNVEMDATPGIDLTRV) is linker 12. The coil 2 stretch occupies residues 266-404 (LAEMREQYEA…ATYRSLLEGQ (139 aa)). The interval 405–438 (DAKMTGFNTGGNSTTTSNTSTSPSTSGRPDFRKY) is tail. The interval 408–438 (MTGFNTGGNSTTTSNTSTSPSTSGRPDFRKY) is disordered. Positions 409–431 (TGFNTGGNSTTTSNTSTSPSTSG) are enriched in low complexity.

It belongs to the intermediate filament family. In terms of assembly, heterotetramer of two type I and two type II keratins. Post-translationally, O-glycosylated; glycans consist of single N-acetylglucosamine residues.

Its function is as follows. Type 1 keratin. Maintains postnatal tongue mucosal cell homeostasis and tissue organization in response to mechanical stress, potentially via regulation of the G1/S phase cyclins CCNE1 and CCNE2. In Rattus norvegicus (Rat), this protein is Keratin, type I cytoskeletal 13.